A 290-amino-acid polypeptide reads, in one-letter code: 33 kDa chaperonin (290 aa).

2 disulfide bridges follow: Cys235–Cys237 and Cys268–Cys271.

This sequence belongs to the HSP33 family. Under oxidizing conditions two disulfide bonds are formed involving the reactive cysteines. Under reducing conditions zinc is bound to the reactive cysteines and the protein is inactive.

It is found in the cytoplasm. In terms of biological role, redox regulated molecular chaperone. Protects both thermally unfolding and oxidatively damaged proteins from irreversible aggregation. Plays an important role in the bacterial defense system toward oxidative stress. The chain is 33 kDa chaperonin from Streptococcus pyogenes serotype M5 (strain Manfredo).